The sequence spans 443 residues: Serine--tRNA ligase (443 aa).

246–248 (TAE) contributes to the L-serine binding site. Position 277-279 (277-279 (RAE)) interacts with ATP. Glutamate 300 serves as a coordination point for L-serine. Residue 367-370 (EISS) coordinates ATP. Residue serine 402 participates in L-serine binding.

The protein belongs to the class-II aminoacyl-tRNA synthetase family. Type-1 seryl-tRNA synthetase subfamily. Homodimer. The tRNA molecule binds across the dimer.

The protein localises to the cytoplasm. It carries out the reaction tRNA(Ser) + L-serine + ATP = L-seryl-tRNA(Ser) + AMP + diphosphate + H(+). The catalysed reaction is tRNA(Sec) + L-serine + ATP = L-seryl-tRNA(Sec) + AMP + diphosphate + H(+). Its pathway is aminoacyl-tRNA biosynthesis; selenocysteinyl-tRNA(Sec) biosynthesis; L-seryl-tRNA(Sec) from L-serine and tRNA(Sec): step 1/1. Functionally, catalyzes the attachment of serine to tRNA(Ser). Is also able to aminoacylate tRNA(Sec) with serine, to form the misacylated tRNA L-seryl-tRNA(Sec), which will be further converted into selenocysteinyl-tRNA(Sec). This Bradyrhizobium diazoefficiens (strain JCM 10833 / BCRC 13528 / IAM 13628 / NBRC 14792 / USDA 110) protein is Serine--tRNA ligase.